The sequence spans 968 residues: RNA polymerase-associated protein RapA (968 aa).

Residues 164 to 334 (EVGQRHAPRV…FARLRLLDPN (171 aa)) form the Helicase ATP-binding domain. Residue 177-184 (DEVGLGKT) participates in ATP binding. Residues 280–283 (DEAH) carry the DEAH box motif. The Helicase C-terminal domain maps to 490–664 (RVEWLLNYLV…AAPTEQEGLD (175 aa)).

This sequence belongs to the SNF2/RAD54 helicase family. RapA subfamily. In terms of assembly, interacts with the RNAP. Has a higher affinity for the core RNAP than for the holoenzyme. Its ATPase activity is stimulated by binding to RNAP.

Transcription regulator that activates transcription by stimulating RNA polymerase (RNAP) recycling in case of stress conditions such as supercoiled DNA or high salt concentrations. Probably acts by releasing the RNAP, when it is trapped or immobilized on tightly supercoiled DNA. Does not activate transcription on linear DNA. Probably not involved in DNA repair. The sequence is that of RNA polymerase-associated protein RapA from Serratia proteamaculans (strain 568).